The chain runs to 634 residues: Serine/threonine kinase NLK (634 aa).

Residues 240–531 enclose the Protein kinase domain; it reads SQPDRPIGYG…VEEALQHRYL (292 aa). ATP contacts are provided by residues 246 to 254 and Lys-269; that span reads IGYGAFGVV. The active-site Proton acceptor is the Asp-366.

It belongs to the protein kinase superfamily. CMGC Ser/Thr protein kinase family. MAP kinase subfamily. In terms of assembly, component of the beta-catenin-lit-1 complex (also called the lit-1/wrm-1 complex or the wrm-1/lit-1 kinase complex) at least composed of lit-1 and wrm-1. Interacts with wrm-1 (via N-terminus); the interaction is direct and activates lit-1 kinase activity which leads to the phosphorylation of pop-1. This promotes pop-1 interaction with par-5 and translocation of pop-1 from the nucleus to the cytoplasm. Interacts with pop-1 (when phosphorylated on 'Ser-118' and 'Ser-127'); the interaction is dependent on the beta-catenin-lit-1 complex. Mg(2+) is required as a cofactor. In terms of tissue distribution, expressed in the pharynx and seam and vulval cells.

The protein resides in the cytoplasm. It localises to the cell cortex. Its subcellular location is the nucleus. It carries out the reaction L-seryl-[protein] + ATP = O-phospho-L-seryl-[protein] + ADP + H(+). The catalysed reaction is L-threonyl-[protein] + ATP = O-phospho-L-threonyl-[protein] + ADP + H(+). In terms of biological role, has a role in the Wnt signaling pathway controlling the asymmetry of cell divisions during embryogenesis. Operates in the AB and EMS cell lineages influencing cell specification. Required for body wall muscle development, endoderm development, pop-1 asymmetry and T-cell division asymmetry. Component of the beta-catenin-lit-1 complex which promotes the phosphorylation, down-regulation and subcellular relocation of pop-1. Regulates plp-1 nuclear localization in embryos. Plays a role in male tail tip morphogenesis. The sequence is that of Serine/threonine kinase NLK from Caenorhabditis elegans.